A 282-amino-acid chain; its full sequence is MRIRLDLDYDGTDFHGWARQGDSDLRTVQKVLEDNLGMVLRAPVELTVAGRTDAGVHAAGQVAHFDIPRESLQQRSIDGDPTKLVRRLSRLLPEDIRVHGVNYAPEGFDARFSALRRHYVYRITTHPAGPLPTRVRDTAAWPKPVDIQAMQTAADVLIGLHDFVAFCKAKPNASTVRELQEFTWHDVSTPTEPQLYEAHVVADAFCWSMVRSLVGSCMAVGEGRRAGDFTAQLLTATERSPDVPVAPAKGLSLVGVDYPDDDQLRARAEETRAVRGALPGAP.

The active-site Nucleophile is aspartate 53. Tyrosine 119 provides a ligand contact to substrate.

It belongs to the tRNA pseudouridine synthase TruA family. In terms of assembly, homodimer.

It catalyses the reaction uridine(38/39/40) in tRNA = pseudouridine(38/39/40) in tRNA. Functionally, formation of pseudouridine at positions 38, 39 and 40 in the anticodon stem and loop of transfer RNAs. This is tRNA pseudouridine synthase A from Corynebacterium efficiens (strain DSM 44549 / YS-314 / AJ 12310 / JCM 11189 / NBRC 100395).